The sequence spans 1088 residues: MALSLYYDEDDDENENENKDKPNNDFKNQQQINTSKTTNNNNNINNKNNYNNKFNDDDIFNNDKIITKPRVTTTTTTTKNTSTNSNINKTKFNDDDIFDDEDEDSNSNKTTTTTTTTTTTTDTIITNDYRYQKTVPFSSFCDLMNRIINDTKISNKKNYLEKFMNHYKDEPNNFYQLLRLILPQLDKDRNSYGLKEKTLARLYVELLNISPESVDAMRLLNWKKSTNDEIGGDFGTAVYLSLKNRCNNDNGRIKVSMGDINESLDQLSQPLTDKKTKVSILKKVLRSTTAQEQKWFVRIILKEMKNGLSDNITLKFFHPDAIDHFNITSNLRLVCTNLFYMTQSKQKELKDKQKLEEKENLLKQQQQQQNDLDIYKLEIKLFNPIKPMLANRQSIDNLSMILNSAISATQFVVEKKFDGERIQIHKDGEQVKYFSRNSNDSTGIYGSMFTPIVKECVLAERCILDGELIVWDSISQRFEDFGNLKTLALNKDGISGSGDPLGINYGKQLCFIAFDILFVKDQSVMNLPLMQRLMLLKRCVTIKSKQFEISEQTTVNSISQIISLLESAIINREEGLMLKNLHSLYVPAERKDKWVKIKPEYIDGMGNGADDLDLVIIGGYYGSGLNRRGGTISHFMLGVPFIADSTDTDIDDESTFDKNVIFYSFCKVGSGYTDIQLKSLQKDLDPHWNNFSTSKPPSIIQLAEPFKEKPDVWIDPRVYSKVLQIKASQIVVTDKYKCGYTLRFPRVLKIRDDKGWKDCCSHEEIIDLFTNYSTNLNFKRDHEYGDGSGGKNKKLKKSKKTTNQLLADSGLKVLSIFQDTDTSGIIPTQNIFQGIEICVIKGSSGEYTKSKLEIMIVEMGGSKVQYPSRNTNYVISSKEVVKIQNLIQSGFIDIVSFNWIVDCYNEKRLVPLGPKYMIFSTESTKKRFLLDSDQFGDSYINETTEQSLKDSFNQIDKLKLKKQLSINSTTTTTTTSISKYFSNCWWSLFKEFTFYLDLYQVVGEKSTLIENNNLELSNLNIQFYGGKISIEFNNKITHVVLDSLDLSRITFIKNKINSLSLPIQIVTTNWIQLSINNYSIQPILEILD.

Disordered regions lie at residues 1 to 56 (MALS…KFND) and 73 to 117 (TTTT…TTTT). Composition is skewed to low complexity over residues 25–53 (DFKNQQQINTSKTTNNNNNINNKNNYNNK) and 73–90 (TTTTTTKNTSTNSNINKT). The segment covering 95 to 105 (DDIFDDEDEDS) has biased composition (acidic residues). Residues glutamate 414, lysine 416, arginine 421, glutamate 467, phenylalanine 514, glutamate 574, lysine 579, lysine 596, and lysine 598 each contribute to the ATP site. Residue lysine 416 is the N6-AMP-lysine intermediate of the active site. Glutamate 467 provides a ligand contact to Mg(2+). Position 574 (glutamate 574) interacts with Mg(2+). BRCT domains are found at residues 827 to 917 (PTQN…PKYM) and 984 to 1088 (CWWS…EILD).

The protein belongs to the ATP-dependent DNA ligase family. Requires Mg(2+) as cofactor.

The protein resides in the nucleus. It carries out the reaction ATP + (deoxyribonucleotide)n-3'-hydroxyl + 5'-phospho-(deoxyribonucleotide)m = (deoxyribonucleotide)n+m + AMP + diphosphate.. DNA ligase involved in DNA non-homologous end joining (NHEJ); required for double-strand break (DSB) repair. The protein is DNA ligase 4 (lig4) of Dictyostelium discoideum (Social amoeba).